Consider the following 254-residue polypeptide: 4-hydroxy-tetrahydrodipicolinate reductase (254 aa).

7 to 12 (GASGRI) contributes to the NAD(+) binding site. Residue R35 coordinates NADP(+). NAD(+) contacts are provided by residues 91 to 93 (GTT) and 115 to 118 (AHNM). The active-site Proton donor/acceptor is the H147. H148 contributes to the (S)-2,3,4,5-tetrahydrodipicolinate binding site. Residue K151 is the Proton donor of the active site. 157 to 158 (GT) contributes to the (S)-2,3,4,5-tetrahydrodipicolinate binding site.

Belongs to the DapB family.

It localises to the cytoplasm. It catalyses the reaction (S)-2,3,4,5-tetrahydrodipicolinate + NAD(+) + H2O = (2S,4S)-4-hydroxy-2,3,4,5-tetrahydrodipicolinate + NADH + H(+). It carries out the reaction (S)-2,3,4,5-tetrahydrodipicolinate + NADP(+) + H2O = (2S,4S)-4-hydroxy-2,3,4,5-tetrahydrodipicolinate + NADPH + H(+). It participates in amino-acid biosynthesis; L-lysine biosynthesis via DAP pathway; (S)-tetrahydrodipicolinate from L-aspartate: step 4/4. Its function is as follows. Catalyzes the conversion of 4-hydroxy-tetrahydrodipicolinate (HTPA) to tetrahydrodipicolinate. The chain is 4-hydroxy-tetrahydrodipicolinate reductase from Helicobacter pylori (strain G27).